A 191-amino-acid polypeptide reads, in one-letter code: Adenine phosphoribosyltransferase 5 (191 aa).

The protein belongs to the purine/pyrimidine phosphoribosyltransferase family. As to quaternary structure, homodimer.

It localises to the cytoplasm. It catalyses the reaction AMP + diphosphate = 5-phospho-alpha-D-ribose 1-diphosphate + adenine. The protein operates within purine metabolism; AMP biosynthesis via salvage pathway; AMP from adenine: step 1/1. In terms of biological role, catalyzes a salvage reaction resulting in the formation of AMP, that is energically less costly than de novo synthesis. May contribute to the recycling of adenine into adenylate nucleotides and the inactivation of cytokinins by phosphoribosylation. Possesses low activity toward adenine, but can efficiently convert cytokinins from free bases (active form) to the corresponding nucleotides (inactive form). This is Adenine phosphoribosyltransferase 5 (APT5) from Arabidopsis thaliana (Mouse-ear cress).